Reading from the N-terminus, the 247-residue chain is tRNA1(Val) (adenine(37)-N6)-methyltransferase (247 aa).

Belongs to the methyltransferase superfamily. tRNA (adenine-N(6)-)-methyltransferase family.

Its subcellular location is the cytoplasm. The catalysed reaction is adenosine(37) in tRNA1(Val) + S-adenosyl-L-methionine = N(6)-methyladenosine(37) in tRNA1(Val) + S-adenosyl-L-homocysteine + H(+). Functionally, specifically methylates the adenine in position 37 of tRNA(1)(Val) (anticodon cmo5UAC). The chain is tRNA1(Val) (adenine(37)-N6)-methyltransferase from Edwardsiella ictaluri (strain 93-146).